We begin with the raw amino-acid sequence, 449 residues long: Glucose-6-phosphate isomerase (449 aa).

Glu291 (proton donor) is an active-site residue. Residues His312 and Lys426 contribute to the active site.

Belongs to the GPI family.

It localises to the cytoplasm. It carries out the reaction alpha-D-glucose 6-phosphate = beta-D-fructose 6-phosphate. It functions in the pathway carbohydrate biosynthesis; gluconeogenesis. It participates in carbohydrate degradation; glycolysis; D-glyceraldehyde 3-phosphate and glycerone phosphate from D-glucose: step 2/4. Catalyzes the reversible isomerization of glucose-6-phosphate to fructose-6-phosphate. In Streptococcus pyogenes serotype M1, this protein is Glucose-6-phosphate isomerase.